The following is a 307-amino-acid chain: Thiohydrolase apmlB (307 aa).

This sequence belongs to the polyketide transferase af380 family.

Thiohydrolase; part of the gene cluster that mediates the biosynthesis of phaeospelide A, a fungal polyene macrolide with a 34-membered macrolactone ring and an all-trans conjugated hexaene structure. The HR-PKS ApmlA uses acetyl-CoA and malonyl-CoA as its starter and extender units, respectively, and provides the large carbon framework in phaeospelide via 16 cycles of polyketide chain elongation, which is the largest number identified in fungal iterative PKSs thus far. During round 1, the KR domain reduces beta -ketone to an L-oriented hydroxy group, while during later rounds, it provides hydroxy groups in the D-configuration. The characteristic conjugated hexaene moiety is built during the later rounds (10-15), when the KR and DH domains are at work but ER is off. Phylogenetic analysis of the DH domain suggests that a polyene formation is programmed in the DH domain. Finally, the mature ACP-tethered carbon chain is transferred to the serine residue of the thiohydrolase apmlB, followed by intramolecular macrolactonization, generating phaeospelide A. When one elongation cycle during rounds 7-9 is skipped, phaeospelide B is biosynthesized instead. The sequence is that of Thiohydrolase apmlB from Arthrinium phaeospermum (Gymnosporium phaeospermum).